A 105-amino-acid polypeptide reads, in one-letter code: UPF0166 protein aq_450 (105 aa).

It belongs to the UPF0166 family.

This Aquifex aeolicus (strain VF5) protein is UPF0166 protein aq_450.